The primary structure comprises 290 residues: Nucleoid occlusion protein (290 aa).

The segment at residues 153–172 (EALAQRLGKGQSTIANKLRL) is a DNA-binding region (H-T-H motif).

It belongs to the ParB family.

It is found in the cytoplasm. The protein localises to the nucleoid. In terms of biological role, effects nucleoid occlusion by binding relatively nonspecifically to DNA and preventing the assembly of the division machinery in the vicinity of the nucleoid, especially under conditions that disturb the cell cycle. It helps to coordinate cell division and chromosome segregation by preventing the formation of the Z ring through the nucleoid, which would cause chromosome breakage. This is Nucleoid occlusion protein from Bacillus cereus (strain AH187).